Reading from the N-terminus, the 251-residue chain is Proteasome subunit alpha type-4-like (251 aa).

This sequence belongs to the peptidase T1A family. In terms of assembly, the 26S proteasome consists of a 20S proteasome core and two 19S regulatory subunits. The 20S proteasome core is composed of 28 subunits that are arranged in four stacked rings, resulting in a barrel-shaped structure. The two end rings are each formed by seven alpha subunits, and the two central rings are each formed by seven beta subunits. The catalytic chamber with the active sites is on the inside of the barrel. In terms of tissue distribution, testis, prominent after meiosis II. After meiosis, predominantly localized to the haploid spermatid nuclei of the 64-cell cysts, remaining during the elongation and condensation of the spermatid nuclei. In mature, motile sperm, expression is seen exclusively in the sperm head.

It is found in the nucleus. Functionally, the proteasome is a multicatalytic proteinase complex which is characterized by its ability to cleave peptides with Arg, Phe, Tyr, Leu, and Glu adjacent to the leaving group at neutral or slightly basic pH. The proteasome has an ATP-dependent proteolytic activity. The polypeptide is Proteasome subunit alpha type-4-like (Prosalpha3T) (Drosophila melanogaster (Fruit fly)).